Reading from the N-terminus, the 213-residue chain is Peroxisomal protein 2 (213 aa).

The Peroxisomal target signal 1 (PTS1) motif lies at 211-213 (ETL).

The protein belongs to the PXP2 family.

It is found in the peroxisome matrix. The protein localises to the cytoplasm. It localises to the cytosol. Its subcellular location is the nucleus. Probably involved in peroxisome formation or maintenance as well as in amino acid metabolism. This Schizosaccharomyces pombe (strain 972 / ATCC 24843) (Fission yeast) protein is Peroxisomal protein 2.